Consider the following 323-residue polypeptide: GTP 3',8-cyclase (323 aa).

One can recognise a Radical SAM core domain in the interval 4–233 (KYGREIDYLR…NGPAKYISIE (230 aa)). Arginine 13 contributes to the GTP binding site. [4Fe-4S] cluster-binding residues include cysteine 20 and cysteine 24. Tyrosine 26 lines the S-adenosyl-L-methionine pocket. A [4Fe-4S] cluster-binding site is contributed by cysteine 27. Arginine 63 lines the GTP pocket. Glycine 67 lines the S-adenosyl-L-methionine pocket. Threonine 94 lines the GTP pocket. Serine 118 provides a ligand contact to S-adenosyl-L-methionine. GTP is bound at residue lysine 154. Methionine 188 is an S-adenosyl-L-methionine binding site. Residues cysteine 250 and cysteine 253 each coordinate [4Fe-4S] cluster. 255–257 (RIR) is a GTP binding site. Residue cysteine 267 participates in [4Fe-4S] cluster binding.

Belongs to the radical SAM superfamily. MoaA family. As to quaternary structure, monomer and homodimer. [4Fe-4S] cluster is required as a cofactor.

The enzyme catalyses GTP + AH2 + S-adenosyl-L-methionine = (8S)-3',8-cyclo-7,8-dihydroguanosine 5'-triphosphate + 5'-deoxyadenosine + L-methionine + A + H(+). It functions in the pathway cofactor biosynthesis; molybdopterin biosynthesis. Catalyzes the cyclization of GTP to (8S)-3',8-cyclo-7,8-dihydroguanosine 5'-triphosphate. This is GTP 3',8-cyclase from Clostridium perfringens (strain 13 / Type A).